A 737-amino-acid polypeptide reads, in one-letter code: Disintegrin and metalloproteinase domain-containing protein 2 (737 aa).

An N-terminal signal peptide occupies residues 1-18 (MWLLLLLLSGLSRLGGLS). Residues 19–180 (EPQTEGTREK…YKIRSIKPQR (162 aa)) constitute a propeptide that is removed on maturation. The Extracellular segment spans residues 19–688 (EPQTEGTREK…ASAYRSKSAR (670 aa)). Residues Asn-128 and Asn-226 are each glycosylated (N-linked (GlcNAc...) asparagine). The Peptidase M12B domain occupies 184 to 381 (HYLEIHIVVE…QSSHCLQNQP (198 aa)). 4 disulfide bridges follow: Cys-293-Cys-376, Cys-335-Cys-360, Cys-337-Cys-342, and Cys-450-Cys-470. Residues Asn-359, Asn-464, Asn-491, and Asn-571 are each glycosylated (N-linked (GlcNAc...) asparagine). The Disintegrin domain occupies 389–478 (MAVCGNGELE…VCEEDFFVQD (90 aa)). Residues 617-650 (LNYDCTPEKCNHHGVCNNKKHCHCEPTYLPPDCK) form the EGF-like domain. 3 cysteine pairs are disulfide-bonded: Cys-621-Cys-632, Cys-626-Cys-638, and Cys-640-Cys-649. The helical transmembrane segment at 689–709 (WPFFLIIPFYVVILVLIGMLV) threads the bilayer. At 710–737 (KVYSQRKKWRMDDFSSEEQFESESESKD) the chain is on the cytoplasmic side. The residue at position 731 (Ser-731) is a Phosphoserine.

Heterodimer with ADAM1/fertilin subunit alpha. In terms of processing, the prodomain and the metalloprotease domain are cleaved during the epididymal maturation of the spermatozoa.

The protein resides in the membrane. Functionally, sperm surface membrane protein that may be involved in sperm-egg plasma membrane adhesion and fusion during fertilization. Could have a direct role in sperm-zona binding or migration of sperm from the uterus into the oviduct. Interactions with egg membrane could be mediated via binding between its disintegrin-like domain to one or more integrins receptors on the egg. This is a non catalytic metalloprotease-like protein. The sequence is that of Disintegrin and metalloproteinase domain-containing protein 2 (Adam2) from Rattus norvegicus (Rat).